The primary structure comprises 145 residues: Ribonuclease HI (145 aa).

Residues 1-142 (MNQTVYLYTD…ADDLANRGAA (142 aa)) form the RNase H type-1 domain. The Mg(2+) site is built by aspartate 10, glutamate 48, aspartate 70, and aspartate 134.

Belongs to the RNase H family. In terms of assembly, monomer. Requires Mg(2+) as cofactor.

The protein resides in the cytoplasm. The enzyme catalyses Endonucleolytic cleavage to 5'-phosphomonoester.. Endonuclease that specifically degrades the RNA of RNA-DNA hybrids. The chain is Ribonuclease HI from Neisseria meningitidis serogroup B (strain ATCC BAA-335 / MC58).